The primary structure comprises 128 residues: uncharacterized protein (128 aa).

The region spanning 2–127 (KLLQIRLLVN…DHNLIEIYKM (126 aa)) is the VOC domain. Glu-48 and Glu-123 together coordinate Ni(2+).

The protein belongs to the glyoxalase I family.

This is an uncharacterized protein from Bacillus subtilis (strain 168).